A 330-amino-acid chain; its full sequence is Ribosomal RNA small subunit methyltransferase C (330 aa).

Belongs to the methyltransferase superfamily. RsmC family. Monomer.

Its subcellular location is the cytoplasm. The enzyme catalyses guanosine(1207) in 16S rRNA + S-adenosyl-L-methionine = N(2)-methylguanosine(1207) in 16S rRNA + S-adenosyl-L-homocysteine + H(+). Its function is as follows. Specifically methylates the guanine in position 1207 of 16S rRNA in the 30S particle. The chain is Ribosomal RNA small subunit methyltransferase C from Haemophilus influenzae (strain 86-028NP).